The sequence spans 60 residues: Small ribosomal subunit protein eS31 (60 aa).

4 residues coordinate Zn(2+): Cys24, Cys27, Cys42, and Cys45. Residues 24–45 (CPRCGPGVFMADHGNRYACGRC) form a C4-type zinc finger.

It belongs to the eukaryotic ribosomal protein eS31 family. In terms of assembly, part of the 30S ribosomal subunit. It depends on Zn(2+) as a cofactor.

The polypeptide is Small ribosomal subunit protein eS31 (Methanopyrus kandleri (strain AV19 / DSM 6324 / JCM 9639 / NBRC 100938)).